Reading from the N-terminus, the 702-residue chain is Polyribonucleotide nucleotidyltransferase (702 aa).

Asp485 and Asp491 together coordinate Mg(2+). The KH domain occupies 552 to 612; the sequence is PRTEIICIDP…EGVKKAISII (61 aa). Residues 622 to 690 enclose the S1 motif domain; it reads GEIYLGKVTK…NQGRINLSRK (69 aa).

Belongs to the polyribonucleotide nucleotidyltransferase family. It depends on Mg(2+) as a cofactor.

Its subcellular location is the cytoplasm. It catalyses the reaction RNA(n+1) + phosphate = RNA(n) + a ribonucleoside 5'-diphosphate. In terms of biological role, involved in mRNA degradation. Catalyzes the phosphorolysis of single-stranded polyribonucleotides processively in the 3'- to 5'-direction. The chain is Polyribonucleotide nucleotidyltransferase from Clostridium botulinum (strain 657 / Type Ba4).